A 461-amino-acid chain; its full sequence is Cysteine--tRNA ligase (461 aa).

C28 lines the Zn(2+) pocket. A 'HIGH' region motif is present at residues 30-40 (ITVYDLCHIGH). Positions 209, 234, and 238 each coordinate Zn(2+). The short motif at 266-270 (KMSKS) is the 'KMSKS' region element. K269 is a binding site for ATP.

The protein belongs to the class-I aminoacyl-tRNA synthetase family. In terms of assembly, monomer. Zn(2+) is required as a cofactor.

The protein resides in the cytoplasm. The enzyme catalyses tRNA(Cys) + L-cysteine + ATP = L-cysteinyl-tRNA(Cys) + AMP + diphosphate. In Shigella flexneri, this protein is Cysteine--tRNA ligase.